A 309-amino-acid chain; its full sequence is Ornithine carbamoyltransferase (309 aa).

Carbamoyl phosphate is bound by residues 57-60, Gln84, Arg108, and 135-138; these read STRT and HPCQ. Residues Asn166, Asp224, and 228–229 each bind L-ornithine; that span reads SM. Residues 264-265 and Arg292 each bind carbamoyl phosphate; that span reads CL.

This sequence belongs to the aspartate/ornithine carbamoyltransferase superfamily. OTCase family.

The protein resides in the cytoplasm. The enzyme catalyses carbamoyl phosphate + L-ornithine = L-citrulline + phosphate + H(+). It functions in the pathway amino-acid biosynthesis; L-arginine biosynthesis; L-arginine from L-ornithine and carbamoyl phosphate: step 1/3. Functionally, reversibly catalyzes the transfer of the carbamoyl group from carbamoyl phosphate (CP) to the N(epsilon) atom of ornithine (ORN) to produce L-citrulline. In Paracidovorax citrulli (strain AAC00-1) (Acidovorax citrulli), this protein is Ornithine carbamoyltransferase.